A 79-amino-acid polypeptide reads, in one-letter code: Small ribosomal subunit protein bS18B (79 aa).

This sequence belongs to the bacterial ribosomal protein bS18 family. Part of the 30S ribosomal subunit. Forms a tight heterodimer with protein bS6.

Functionally, binds as a heterodimer with protein bS6 to the central domain of the 16S rRNA, where it helps stabilize the platform of the 30S subunit. This is Small ribosomal subunit protein bS18B from Saccharopolyspora erythraea (strain ATCC 11635 / DSM 40517 / JCM 4748 / NBRC 13426 / NCIMB 8594 / NRRL 2338).